We begin with the raw amino-acid sequence, 360 residues long: uncharacterized protein (360 aa).

The region spanning Lys-11–Glu-40 is the 4Fe-4S ferredoxin-type domain.

Belongs to the FrhB family.

This is an uncharacterized protein from Methanocaldococcus jannaschii (strain ATCC 43067 / DSM 2661 / JAL-1 / JCM 10045 / NBRC 100440) (Methanococcus jannaschii).